The primary structure comprises 252 residues: MADLNVGVVVFPGSNCDHDTEYAVASFSGVKPVMLWHNEHDLKGCDAIILPGGFSYGDYLRCGSIARFSPIMREVIDFAGQGRPVLGICNGFQVLVESGLLEGALIRNAGRKFICRQSTISVVNNSTIFTDRYEKGEVLRVPVAHGEGNYYASVETIDSLESNGQVVFRYTDAEGNATAEANFNGSLNNIAGITNKQGNVLGLMPHPERASEELLGSGDGRRVFESLFAHLAGTKRSSRGCCSTSPTRRSAS.

In terms of domain architecture, Glutamine amidotransferase type-1 spans 6–237 (VGVVVFPGSN…FAHLAGTKRS (232 aa)). C89 (nucleophile) is an active-site residue. Active-site residues include H206 and E208.

Part of the FGAM synthase complex composed of 1 PurL, 1 PurQ and 2 PurS subunits.

The protein localises to the cytoplasm. The enzyme catalyses N(2)-formyl-N(1)-(5-phospho-beta-D-ribosyl)glycinamide + L-glutamine + ATP + H2O = 2-formamido-N(1)-(5-O-phospho-beta-D-ribosyl)acetamidine + L-glutamate + ADP + phosphate + H(+). The catalysed reaction is L-glutamine + H2O = L-glutamate + NH4(+). Its pathway is purine metabolism; IMP biosynthesis via de novo pathway; 5-amino-1-(5-phospho-D-ribosyl)imidazole from N(2)-formyl-N(1)-(5-phospho-D-ribosyl)glycinamide: step 1/2. In terms of biological role, part of the phosphoribosylformylglycinamidine synthase complex involved in the purines biosynthetic pathway. Catalyzes the ATP-dependent conversion of formylglycinamide ribonucleotide (FGAR) and glutamine to yield formylglycinamidine ribonucleotide (FGAM) and glutamate. The FGAM synthase complex is composed of three subunits. PurQ produces an ammonia molecule by converting glutamine to glutamate. PurL transfers the ammonia molecule to FGAR to form FGAM in an ATP-dependent manner. PurS interacts with PurQ and PurL and is thought to assist in the transfer of the ammonia molecule from PurQ to PurL. This is Phosphoribosylformylglycinamidine synthase subunit PurQ from Chlorobaculum parvum (strain DSM 263 / NCIMB 8327) (Chlorobium vibrioforme subsp. thiosulfatophilum).